A 182-amino-acid polypeptide reads, in one-letter code: Isopentenyl-diphosphate Delta-isomerase (182 aa).

Positions 25 and 32 each coordinate Mn(2+). The Nudix hydrolase domain occupies 30-164; it reads PLHLAFSCWL…PWAFSPWMVM (135 aa). Cys67 is a catalytic residue. Mn(2+) is bound at residue His69. A Mg(2+)-binding site is contributed by Glu87. Residues Glu114 and Glu116 each coordinate Mn(2+). The active site involves Glu116.

The protein belongs to the IPP isomerase type 1 family. As to quaternary structure, homodimer. Requires Mg(2+) as cofactor. Mn(2+) serves as cofactor.

It is found in the cytoplasm. It carries out the reaction isopentenyl diphosphate = dimethylallyl diphosphate. It participates in isoprenoid biosynthesis; dimethylallyl diphosphate biosynthesis; dimethylallyl diphosphate from isopentenyl diphosphate: step 1/1. Catalyzes the 1,3-allylic rearrangement of the homoallylic substrate isopentenyl (IPP) to its highly electrophilic allylic isomer, dimethylallyl diphosphate (DMAPP). The sequence is that of Isopentenyl-diphosphate Delta-isomerase from Salmonella arizonae (strain ATCC BAA-731 / CDC346-86 / RSK2980).